A 139-amino-acid polypeptide reads, in one-letter code: MAVCIAVIAKENYPLYIRSVPTENELKFHYTVHTSLDVVDEKISAMGKALVDQRELYLGLLYPTEDYKVYGYVTNSKVKFVMVVDSSNTALRDNEIRSMFRKLHNSYTDIMCNPFYNPGDRIHSRAFDTMVNSMMMQVC.

This sequence belongs to the TRAPP small subunits family. Sedlin subfamily.

It localises to the cytoplasm. It is found in the perinuclear region. The protein localises to the endoplasmic reticulum. The protein resides in the golgi apparatus. Its function is as follows. May play a role in vesicular transport from endoplasmic reticulum to Golgi. The protein is Trafficking protein particle complex subunit 2-like protein (TRAPPC2L) of Taeniopygia guttata (Zebra finch).